We begin with the raw amino-acid sequence, 204 residues long: Oxidoreductase iacF (204 aa).

This sequence belongs to the oxidoreductase OpS7 family.

The protein operates within secondary metabolite biosynthesis. Functionally, oxidoreductase; part of the gene cluster that mediates the biosynthesis of iso-A82775C, a enylepoxycyclohexane and biosynthetic precursor of the chloropestolide anticancer natural products. Within the cluster, the prenyltransferase iacE prenylates siccayne to generate pestalodiol E, using dimethylallyl diphosphate (DMAPP) as cosubstrate. The probable oxidoreductase iacF is then involved in the epoxidation of pestalodiol F to pestalodiol F, which is further converted to pestalofone A by the short-chain dehydrogenase/reductase iacG. Iso-A82775C is subsequently generated from pestalofone A by the short-chain dehydrogenase/reductase iacC. Iso-A82775C is further condensed with maldoxin via a Diels-Alder reaction to produce the anticancer natural products chloropestolides A to E. The sequence is that of Oxidoreductase iacF from Pestalotiopsis fici (strain W106-1 / CGMCC3.15140).